The primary structure comprises 533 residues: Bifunctional aspartate aminotransferase and L-aspartate beta-decarboxylase (533 aa).

The L-aspartate site is built by G115 and N256. N6-(pyridoxal phosphate)lysine is present on K315. R497 contacts L-aspartate.

It belongs to the class-I pyridoxal-phosphate-dependent aminotransferase family. In terms of assembly, homododecamer. Pyridoxal 5'-phosphate is required as a cofactor.

It carries out the reaction L-aspartate + H(+) = L-alanine + CO2. It catalyses the reaction L-aspartate + 2-oxoglutarate = oxaloacetate + L-glutamate. Its function is as follows. Bifunctional enzyme that has both L-aspartate decarboxylase and transaminase activity. The protein is Bifunctional aspartate aminotransferase and L-aspartate beta-decarboxylase of Comamonas testosteroni (Pseudomonas testosteroni).